A 480-amino-acid polypeptide reads, in one-letter code: Aspartyl/glutamyl-tRNA(Asn/Gln) amidotransferase subunit B (480 aa).

The protein belongs to the GatB/GatE family. GatB subfamily. In terms of assembly, heterotrimer of A, B and C subunits.

The enzyme catalyses L-glutamyl-tRNA(Gln) + L-glutamine + ATP + H2O = L-glutaminyl-tRNA(Gln) + L-glutamate + ADP + phosphate + H(+). The catalysed reaction is L-aspartyl-tRNA(Asn) + L-glutamine + ATP + H2O = L-asparaginyl-tRNA(Asn) + L-glutamate + ADP + phosphate + 2 H(+). Allows the formation of correctly charged Asn-tRNA(Asn) or Gln-tRNA(Gln) through the transamidation of misacylated Asp-tRNA(Asn) or Glu-tRNA(Gln) in organisms which lack either or both of asparaginyl-tRNA or glutaminyl-tRNA synthetases. The reaction takes place in the presence of glutamine and ATP through an activated phospho-Asp-tRNA(Asn) or phospho-Glu-tRNA(Gln). This chain is Aspartyl/glutamyl-tRNA(Asn/Gln) amidotransferase subunit B, found in Streptococcus pneumoniae serotype 4 (strain ATCC BAA-334 / TIGR4).